The primary structure comprises 156 residues: Small ribosomal subunit protein uS7 (156 aa).

This sequence belongs to the universal ribosomal protein uS7 family. As to quaternary structure, part of the 30S ribosomal subunit. Contacts proteins S9 and S11.

Its function is as follows. One of the primary rRNA binding proteins, it binds directly to 16S rRNA where it nucleates assembly of the head domain of the 30S subunit. Is located at the subunit interface close to the decoding center, probably blocks exit of the E-site tRNA. This is Small ribosomal subunit protein uS7 from Treponema denticola (strain ATCC 35405 / DSM 14222 / CIP 103919 / JCM 8153 / KCTC 15104).